We begin with the raw amino-acid sequence, 173 residues long: Soluble secreted antigen MPT53 (173 aa).

The signal sequence occupies residues 1 to 38 (MSLRLVSPIKAFADGIVAVAIAVVLMFGLANTPRAVAA). A disulfide bridge links Cys-73 with Cys-76.

Belongs to the thioredoxin family.

The protein localises to the secreted. Functionally, disulfide oxidoreductase that catalyzes the oxidation of reduced, unfolded secreted proteins to form disulfide bonds. Despite a weak homology to thioredoxin this cannot serve as a substrate for thioredoxin reductase. The protein is Soluble secreted antigen MPT53 (mpt53) of Mycobacterium bovis (strain ATCC BAA-935 / AF2122/97).